A 210-amino-acid chain; its full sequence is Na(+)-translocating NADH-quinone reductase subunit D (210 aa).

5 consecutive transmembrane segments (helical) span residues 42–62, 72–92, 103–123, 131–151, and 178–198; these read FVMTLAVTFVTALSNFFVSLI, IIVQMAIIASLVIVVDQILKA, VFVGLIITNCIVMGRAEAFAM, LIDGIGNGLGYGFVLITVGFF, and NGLMLLAPSAFFLIGFMIWAI.

The protein belongs to the NqrDE/RnfAE family. As to quaternary structure, composed of six subunits; NqrA, NqrB, NqrC, NqrD, NqrE and NqrF.

The protein resides in the cell inner membrane. The catalysed reaction is a ubiquinone + n Na(+)(in) + NADH + H(+) = a ubiquinol + n Na(+)(out) + NAD(+). In terms of biological role, NQR complex catalyzes the reduction of ubiquinone-1 to ubiquinol by two successive reactions, coupled with the transport of Na(+) ions from the cytoplasm to the periplasm. NqrA to NqrE are probably involved in the second step, the conversion of ubisemiquinone to ubiquinol. The chain is Na(+)-translocating NADH-quinone reductase subunit D from Vibrio vulnificus (strain CMCP6).